A 1682-amino-acid polypeptide reads, in one-letter code: Merozoite surface protein 1 (1682 aa).

An N-terminal signal peptide occupies residues 1-19; sequence MKIIFFLCSFLFFIINTQC. A disordered region spans residues 68 to 110; sequence AVSTQSAKNPPGATVPSGTASTKGAIRSPGAANPSDDSSDSDA. 4 N-linked (GlcNAc...) asparagine glycosylation sites follow: N233, N462, N528, and N599. The interval 696–729 is disordered; that stretch reads SETTEDGGHSTHTLSQSGETEVTEETEETVGHTT. N-linked (GlcNAc...) asparagine glycans are attached at residues N785, N881, N901, N947, N1071, and N1178. The interval 870-918 is disordered; the sequence is ITGTSSTSSPGNTTVNTAQSATHSNSQNQQSNASSTNTQNGVAVSSGPA. The segment covering 871–909 has biased composition (low complexity); it reads TGTSSTSSPGNTTVNTAQSATHSNSQNQQSNASSTNTQN. 2 disordered regions span residues 1212-1241 and 1433-1453; these read TPPQPDVTPSPLSVRVSGSSGSTKEETQIP and KEFPSSPPTTPPSPAKTDEQK. Residues 1227–1241 are compositionally biased toward polar residues; it reads VSGSSGSTKEETQIP. The span at 1437-1446 shows a compositional bias: pro residues; that stretch reads SSPPTTPPSP. A glycan (N-linked (GlcNAc...) asparagine) is linked at N1569. 2 consecutive EGF-like domains span residues 1573–1613 and 1614–1661; these read HQCV…VENP and NPTC…IFCS. Cystine bridges form between C1575-C1586, C1580-C1596, C1598-C1609, C1617-C1630, C1624-C1644, and C1646-C1660. S1661 carries GPI-anchor amidated serine lipidation. A propeptide spans 1662–1682 (removed in mature form); the sequence is SSNFLGISFLLILMLILYSFI.

In terms of assembly, forms a complex composed of subunits p83, p30, p38, and p42 which remain non-covalently associated; the complex is formed at the merozoite surface prior to egress from host erythrocytes. Forms a complex composed of processed MSP1 subunits, MSP6 subunit p36 and MSP7; the complex is formed at the merozoite surface prior to egress from host erythrocytes. Within the complex, interacts (via subunit p38) with MSP6 subunit p36 and (via subunits p83, p30 and p38) with MSP7 (via subunit p22). Forms a complex composed of MSP1, MSP6, DBLMSP1 and DBLMSP2. Within the complex, interacts (via subunit p38) with DBLMSP1 and DBLMSP2. Forms a complex composed of MSP1, and rhoptry proteins RhopH3, RAP1 and CLAG9/RhopH3. Within the complex, interacts (via subunits p42 and p19) with RhopH3 (via C-terminus). Forms a complex composed of MSP1, MSP6, MSP7, MSP9 and MSP3; within the complex, MSP6 and MSP9 mediate the binding to the host erythrocyte. Interacts (via subunits p19 and p42) with MSP9; the interaction is direct; MSP1 subunits p19 or p42, and MSP9 form a co-ligand complex that interacts with host SLC4A1/Band 3 protein. May interact with PFD6. Interacts with host spectrin. Interacts with host glycophorin GYPA in a sialic acid-independent manner. As to quaternary structure, interacts with host proinflammatory cytokine S100P; the interaction blocks S100P inflammatory and chemotactic activities. In terms of assembly, interacts with host SLC4A1/Band 3 (via 5ABC region) on the host erythrocyte surface in a sialic acid-independent manner. The p190 precursor is cleaved by SUB1 prior to merozoite egress into 4 subunits p83, p30, p38, and p42 which remain non-covalently associated. SUB1-mediated proteolytic cleavage occurs in an orderly manner; the first cleavage occurs at the p30/p38 site, followed by cleavage at the p83/p30 site, the last cleavage occurs at the p38/p42 site. The order of cleavage is essential for parasite viability. SUB1-mediated processing is essential for merozoite egress. In a second processing step during erythrocyte invasion, p42 is cleaved by SUB2 into p33 and p19; the latter remains attached to the merozoite surface via its GPI-anchor and is endocytosed during the subsequent ring stage.

The protein localises to the cell membrane. The protein resides in the secreted. It localises to the vacuole membrane. During the asexual blood stage, involved in merozoite egress from host erythrocytes possibly via its interaction with the host cytoskeleton protein spectrin resulting in the destabilization of the host cytoskeleton and thus leading to erythrocyte cell membrane rupture. Involved in the binding to host erythrocytes and is required for host erythrocyte invasion. In terms of biological role, by binding to host proinflammatory cytokine S100P may interfere with host immune responses. Its function is as follows. Involved in merozoite invasion of host erythrocytes. May play a role in the biogenesis and/or function of the food vacuole during the intraerythrocytic development. This Plasmodium falciparum (isolate ro-33 / Ghana) protein is Merozoite surface protein 1.